Here is a 240-residue protein sequence, read N- to C-terminus: 1-(5-phosphoribosyl)-5-[(5-phosphoribosylamino)methylideneamino] imidazole-4-carboxamide isomerase (240 aa).

Residue aspartate 8 is the Proton acceptor of the active site. Catalysis depends on aspartate 130, which acts as the Proton donor.

It belongs to the HisA/HisF family.

Its subcellular location is the cytoplasm. The catalysed reaction is 1-(5-phospho-beta-D-ribosyl)-5-[(5-phospho-beta-D-ribosylamino)methylideneamino]imidazole-4-carboxamide = 5-[(5-phospho-1-deoxy-D-ribulos-1-ylimino)methylamino]-1-(5-phospho-beta-D-ribosyl)imidazole-4-carboxamide. It participates in amino-acid biosynthesis; L-histidine biosynthesis; L-histidine from 5-phospho-alpha-D-ribose 1-diphosphate: step 4/9. The sequence is that of 1-(5-phosphoribosyl)-5-[(5-phosphoribosylamino)methylideneamino] imidazole-4-carboxamide isomerase from Elusimicrobium minutum (strain Pei191).